The primary structure comprises 5104 residues: Malformin synthetase mlfA (5104 aa).

Residues 225–616 are adenylation 1; that stretch reads ERHAVNRPHS…CGRADTQVKL (392 aa). In terms of domain architecture, Carrier 1 spans 757–830; sequence SRLEQEIQLA…EAASLAEVQE (74 aa). Ser791 carries the O-(pantetheine 4'-phosphoryl)serine modification. Residues 868–1299 form a condensation 1 region; it reads EDVFPCTTMQ…ALNTLSLLQA (432 aa). Residues 1327-1716 are adenylation 2; that stretch reads DRWVTRQPEG…GRKDTQVKLR (390 aa). Positions 1854 to 1931 constitute a Carrier 2 domain; it reads TPASELERTL…QLAAEFGGPA (78 aa). The residue at position 1891 (Ser1891) is an O-(pantetheine 4'-phosphoryl)serine. 2 disordered regions span residues 1928–1961 and 1998–2025; these read GGPA…DGVD and TNKT…KVDS. 2 stretches are compositionally biased toward low complexity: residues 1934–1958 and 2003–2013; these read SASS…STND and SVSSSSSSSSS. Residues 2066-2481 form a condensation 2 region; that stretch reads EDIYPATPLQ…TVSYSDKEAL (416 aa). The adenylation 3 stretch occupies residues 2504 to 2896; it reads VRTPHAPAVC…IGRRDGQLKL (393 aa). One can recognise a Carrier 3 domain in the interval 3032 to 3108; that stretch reads RPVTSQEREM…QLICHLNTIR (77 aa). Residue Ser3069 is modified to O-(pantetheine 4'-phosphoryl)serine. 2 condensation regions span residues 3125–3590 and 3611–4029; these read WVAL…TYDQ and NIYP…EQLV. The interval 4054 to 4444 is adenylation 4; that stretch reads HSSREAVCAW…VGRKDNQIKF (391 aa). The Carrier 4 domain maps to 4578 to 4654; sequence MPSTAAERKM…DLSDQARSLI (77 aa). Ser4615 bears the O-(pantetheine 4'-phosphoryl)serine mark. The segment at 4691 to 5018 is condensation 5; it reads DVLPTTSFQR…LQTIVQHQNN (328 aa).

This sequence belongs to the NRP synthetase family.

It participates in secondary metabolite biosynthesis. Functionally, nonribosomal peptide synthetase; part of the gene cluster that mediates the biosynthesis of malformins, cyclic pentapeptides with a disulfide bond between 2 consecutive cysteins, that show potential anti-tumor as well as antimalarial and antitrypanosomal properties. The nonribosomal peptide synthetase mlfA is responsible of the formation of the cyclic pentapeptide. The malformin biosynthesis clusters in malformin-producing fungi also contain enzymes involved in the formation of the disulfide bond between the two consecutive cysteins within malformins, in addition to additional tailoring enzymes such as methyltransferases or oxidoreductases. They are also composed of up to 4 major facilitator superfamily transporters, and transcription factors probably involved in the regulation of the expression of those clusters. The polypeptide is Malformin synthetase mlfA (Aspergillus vadensis (strain CBS 113365 / IMI 142717 / IBT 24658)).